Reading from the N-terminus, the 175-residue chain is ATP synthase subunit b (175 aa).

Residues 20 to 40 (LIFWTAITFVIVLLILKKIAW) form a helical membrane-spanning segment.

Belongs to the ATPase B chain family. In terms of assembly, F-type ATPases have 2 components, F(1) - the catalytic core - and F(0) - the membrane proton channel. F(1) has five subunits: alpha(3), beta(3), gamma(1), delta(1), epsilon(1). F(0) has four main subunits: a(1), b(2) and c(10-14). The alpha and beta chains form an alternating ring which encloses part of the gamma chain. F(1) is attached to F(0) by a central stalk formed by the gamma and epsilon chains, while a peripheral stalk is formed by the delta and b chains.

The protein localises to the cell inner membrane. Functionally, f(1)F(0) ATP synthase produces ATP from ADP in the presence of a proton or sodium gradient. F-type ATPases consist of two structural domains, F(1) containing the extramembraneous catalytic core and F(0) containing the membrane proton channel, linked together by a central stalk and a peripheral stalk. During catalysis, ATP synthesis in the catalytic domain of F(1) is coupled via a rotary mechanism of the central stalk subunits to proton translocation. Its function is as follows. Component of the F(0) channel, it forms part of the peripheral stalk, linking F(1) to F(0). The polypeptide is ATP synthase subunit b (Chlorobium chlorochromatii (strain CaD3)).